We begin with the raw amino-acid sequence, 235 residues long: Serine protease SplA (235 aa).

Positions 1–35 (MNKNVMVKGLTALTILTSLGFAENISNQPHSIAKA) are cleaved as a signal peptide. Catalysis depends on charge relay system residues histidine 74, aspartate 113, and serine 189.

The protein belongs to the peptidase S1B family.

Its subcellular location is the secreted. In Staphylococcus aureus (strain Mu3 / ATCC 700698), this protein is Serine protease SplA (splA).